The following is a 254-amino-acid chain: CRISPR-associated endonuclease Cas1 (254 aa).

Residues E78, H146, and E161 each coordinate Mn(2+).

It belongs to the CRISPR-associated endonuclease Cas1 family. Homodimer, forms a heterotetramer with a Cas2 homodimer. Requires Mg(2+) as cofactor. It depends on Mn(2+) as a cofactor.

Its function is as follows. CRISPR (clustered regularly interspaced short palindromic repeat), is an adaptive immune system that provides protection against mobile genetic elements (viruses, transposable elements and conjugative plasmids). CRISPR clusters contain spacers, sequences complementary to antecedent mobile elements, and target invading nucleic acids. CRISPR clusters are transcribed and processed into CRISPR RNA (crRNA). Acts as a dsDNA endonuclease. Involved in the integration of spacer DNA into the CRISPR cassette. The chain is CRISPR-associated endonuclease Cas1 from Leptospira interrogans serogroup Icterohaemorrhagiae serovar Lai (strain 56601).